A 535-amino-acid polypeptide reads, in one-letter code: Bifunctional purine biosynthesis protein PurH (535 aa).

Residues 6-151 (TRLPVRRALI…KNHKDVAIVV (146 aa)) form the MGS-like domain.

It belongs to the PurH family.

The catalysed reaction is (6R)-10-formyltetrahydrofolate + 5-amino-1-(5-phospho-beta-D-ribosyl)imidazole-4-carboxamide = 5-formamido-1-(5-phospho-D-ribosyl)imidazole-4-carboxamide + (6S)-5,6,7,8-tetrahydrofolate. It catalyses the reaction IMP + H2O = 5-formamido-1-(5-phospho-D-ribosyl)imidazole-4-carboxamide. The protein operates within purine metabolism; IMP biosynthesis via de novo pathway; 5-formamido-1-(5-phospho-D-ribosyl)imidazole-4-carboxamide from 5-amino-1-(5-phospho-D-ribosyl)imidazole-4-carboxamide (10-formyl THF route): step 1/1. It functions in the pathway purine metabolism; IMP biosynthesis via de novo pathway; IMP from 5-formamido-1-(5-phospho-D-ribosyl)imidazole-4-carboxamide: step 1/1. This chain is Bifunctional purine biosynthesis protein PurH, found in Pseudomonas putida (strain ATCC 700007 / DSM 6899 / JCM 31910 / BCRC 17059 / LMG 24140 / F1).